Consider the following 549-residue polypeptide: Undecaprenyl phosphate-alpha-4-amino-4-deoxy-L-arabinose arabinosyl transferase 1 (549 aa).

Transmembrane regions (helical) follow at residues 9–29 (LLLI…GLWI), 80–102 (LFGV…YLLA), 112–132 (SLAS…AGYA), 133–153 (NLDP…WFTF), 176–196 (FMTK…PYAI), 204–224 (LLIY…PWAL), 257–277 (WWYY…LLPA), 290–310 (SSGF…LSKG), 312–332 (LPAY…NTLV), 342–362 (LLAF…LALV), 377–397 (HLVL…LQAM), and 402–422 (LWAA…AALP).

This sequence belongs to the glycosyltransferase 83 family.

It is found in the cell inner membrane. The enzyme catalyses 4-amino-4-deoxy-alpha-L-arabinopyranosyl di-trans,octa-cis-undecaprenyl phosphate + lipid IVA = lipid IIA + di-trans,octa-cis-undecaprenyl phosphate.. It participates in lipopolysaccharide metabolism; 4-amino-4-deoxy-beta-L-arabinose-lipid A biosynthesis. Catalyzes the transfer of the L-Ara4N moiety of the glycolipid undecaprenyl phosphate-alpha-L-Ara4N to lipid A. The modified arabinose is attached to lipid A and is required for resistance to polymyxin and cationic antimicrobial peptides. The protein is Undecaprenyl phosphate-alpha-4-amino-4-deoxy-L-arabinose arabinosyl transferase 1 of Pseudomonas fluorescens (strain ATCC BAA-477 / NRRL B-23932 / Pf-5).